The following is a 237-amino-acid chain: Ribonuclease PH (237 aa).

Phosphate is bound by residues R86 and 124–126 (GTR).

The protein belongs to the RNase PH family. As to quaternary structure, homohexameric ring arranged as a trimer of dimers.

The enzyme catalyses tRNA(n+1) + phosphate = tRNA(n) + a ribonucleoside 5'-diphosphate. In terms of biological role, phosphorolytic 3'-5' exoribonuclease that plays an important role in tRNA 3'-end maturation. Removes nucleotide residues following the 3'-CCA terminus of tRNAs; can also add nucleotides to the ends of RNA molecules by using nucleoside diphosphates as substrates, but this may not be physiologically important. Probably plays a role in initiation of 16S rRNA degradation (leading to ribosome degradation) during starvation. The sequence is that of Ribonuclease PH from Alteromonas mediterranea (strain DSM 17117 / CIP 110805 / LMG 28347 / Deep ecotype).